The primary structure comprises 201 residues: MELVITGSNNKVSVSDAVFGREFSEDLVHQVVVAYRNAGRAGTKAQKTRSEVAGTTKKSKKQKGGGARHGALTAPIFVGGGVTFAAKPRSFEQKVNRKMYRAAICAIFSELNRQGRLMIVDSFDIEATKTKGLIEKLKGMDVGKRPLIVTEEASEHLYLSARNLPYVQVRDVQGLDPVALVGADTVVITADAVKKVEEWLA.

The interval K44–R68 is disordered.

Belongs to the universal ribosomal protein uL4 family. Part of the 50S ribosomal subunit.

Its function is as follows. One of the primary rRNA binding proteins, this protein initially binds near the 5'-end of the 23S rRNA. It is important during the early stages of 50S assembly. It makes multiple contacts with different domains of the 23S rRNA in the assembled 50S subunit and ribosome. In terms of biological role, forms part of the polypeptide exit tunnel. In Xanthomonas campestris pv. campestris (strain 8004), this protein is Large ribosomal subunit protein uL4.